The following is a 512-amino-acid chain: 2,3-bisphosphoglycerate-independent phosphoglycerate mutase (512 aa).

2 residues coordinate Mn(2+): Asp-14 and Ser-64. Residue Ser-64 is the Phosphoserine intermediate of the active site. Substrate-binding positions include His-125, 155-156, Arg-187, Arg-193, 259-262, and Lys-332; these read RD and RADR. Asp-399, His-403, Asp-440, His-441, and His-459 together coordinate Mn(2+).

It belongs to the BPG-independent phosphoglycerate mutase family. Monomer. The cofactor is Mn(2+).

It carries out the reaction (2R)-2-phosphoglycerate = (2R)-3-phosphoglycerate. It participates in carbohydrate degradation; glycolysis; pyruvate from D-glyceraldehyde 3-phosphate: step 3/5. Functionally, catalyzes the interconversion of 2-phosphoglycerate and 3-phosphoglycerate. This Vesicomyosocius okutanii subsp. Calyptogena okutanii (strain HA) protein is 2,3-bisphosphoglycerate-independent phosphoglycerate mutase.